The following is a 352-amino-acid chain: Ion-translocating oxidoreductase complex subunit D (352 aa).

4 helical membrane-spanning segments follow: residues 20-40 (IMLL…WFFG), 42-62 (GTLV…ALVL), 89-109 (IPPL…VIIA), and 123-143 (PAMI…TSWL). Thr187 is subject to FMN phosphoryl threonine. Transmembrane regions (helical) follow at residues 214–234 (ILAG…GVWL), 242–262 (WHIP…GWLF), 267–287 (LAAP…FFIL), 301–321 (LIFG…GGYP), and 322–342 (DGVA…DYYT).

Belongs to the NqrB/RnfD family. As to quaternary structure, the complex is composed of six subunits: RsxA, RsxB, RsxC, RsxD, RsxE and RsxG. It depends on FMN as a cofactor.

The protein localises to the cell inner membrane. Its function is as follows. Part of a membrane-bound complex that couples electron transfer with translocation of ions across the membrane. Required to maintain the reduced state of SoxR. The sequence is that of Ion-translocating oxidoreductase complex subunit D from Escherichia coli O127:H6 (strain E2348/69 / EPEC).